The chain runs to 131 residues: Phosphoribosyl-AMP cyclohydrolase (131 aa).

Asp78 serves as a coordination point for Mg(2+). Cys79 contributes to the Zn(2+) binding site. Asp80 and Asp82 together coordinate Mg(2+). 2 residues coordinate Zn(2+): Cys96 and Cys103.

It belongs to the PRA-CH family. In terms of assembly, homodimer. Requires Mg(2+) as cofactor. Zn(2+) is required as a cofactor.

The protein localises to the cytoplasm. It carries out the reaction 1-(5-phospho-beta-D-ribosyl)-5'-AMP + H2O = 1-(5-phospho-beta-D-ribosyl)-5-[(5-phospho-beta-D-ribosylamino)methylideneamino]imidazole-4-carboxamide. The protein operates within amino-acid biosynthesis; L-histidine biosynthesis; L-histidine from 5-phospho-alpha-D-ribose 1-diphosphate: step 3/9. In terms of biological role, catalyzes the hydrolysis of the adenine ring of phosphoribosyl-AMP. The sequence is that of Phosphoribosyl-AMP cyclohydrolase from Neisseria gonorrhoeae (strain ATCC 700825 / FA 1090).